The chain runs to 118 residues: Large ribosomal subunit protein bL19 (118 aa).

The protein belongs to the bacterial ribosomal protein bL19 family.

Its function is as follows. This protein is located at the 30S-50S ribosomal subunit interface and may play a role in the structure and function of the aminoacyl-tRNA binding site. This chain is Large ribosomal subunit protein bL19, found in Parafrankia sp. (strain EAN1pec).